The chain runs to 363 residues: Dihydroorotate dehydrogenase (quinone) (363 aa).

FMN contacts are provided by residues 67 to 71 (AGFDK) and Thr-91. Lys-71 contributes to the substrate binding site. 116–120 (NRMGF) provides a ligand contact to substrate. Positions 156 and 189 each coordinate FMN. Substrate is bound at residue Asn-189. The Nucleophile role is filled by Ser-192. Position 194 (Asn-194) interacts with substrate. The FMN site is built by Lys-231 and Thr-259. 260 to 261 (NT) contacts substrate. FMN contacts are provided by residues Gly-287, Gly-316, and 337–338 (YT).

Belongs to the dihydroorotate dehydrogenase family. Type 2 subfamily. As to quaternary structure, monomer. It depends on FMN as a cofactor.

Its subcellular location is the cell membrane. The enzyme catalyses (S)-dihydroorotate + a quinone = orotate + a quinol. It functions in the pathway pyrimidine metabolism; UMP biosynthesis via de novo pathway; orotate from (S)-dihydroorotate (quinone route): step 1/1. Functionally, catalyzes the conversion of dihydroorotate to orotate with quinone as electron acceptor. This is Dihydroorotate dehydrogenase (quinone) from Kocuria rhizophila (strain ATCC 9341 / DSM 348 / NBRC 103217 / DC2201).